The sequence spans 1221 residues: DNA topoisomerase 2 (1221 aa).

ATP-binding positions include Asn65, Asn94, 122–124, 135–142, and 352–354; these read SSN, GRHGYGAK, and QNK. Positions 432 to 546 constitute a Toprim domain; it reads RTLIVTEGDS…SLLVRNPGFI (115 aa). Positions 438, 515, and 517 each coordinate Mg(2+). The Topo IIA-type catalytic domain maps to 681-1097; that stretch reads LAHSVDGLKP…TPVQLWLGEL (417 aa). The O-(5'-phospho-DNA)-tyrosine intermediate role is filled by Tyr771. The segment at 952–961 is interaction with DNA; it reads GLTQRIHING. The interval 1158 to 1198 is disordered; sequence VPPPTKRGAGGRSDGDGGATAAGAAAAVGGRGEKKGPGRAG. The span at 1165 to 1177 shows a compositional bias: gly residues; the sequence is GAGGRSDGDGGAT.

The protein belongs to the type II topoisomerase family. Homodimer. Requires Mg(2+) as cofactor. Mn(2+) is required as a cofactor. The cofactor is Ca(2+).

It localises to the nucleus. It catalyses the reaction ATP-dependent breakage, passage and rejoining of double-stranded DNA.. Control of topological states of DNA by transient breakage and subsequent rejoining of DNA strands. Topoisomerase II makes double-strand breaks. The chain is DNA topoisomerase 2 (TOP2) from Trypanosoma brucei brucei.